A 535-amino-acid polypeptide reads, in one-letter code: Dimethylaniline monooxygenase [N-oxide-forming] 2 (535 aa).

Alanine 2 is subject to N-acetylalanine. Residues 9–13, glutamate 32, 40–41, and 61–62 each bind FAD; these read GAGVS, VW, and NT. NADP(+) is bound by residues 60-61 and 195-198; these read TN and SGSD. Lysine 492 participates in a covalent cross-link: Glycyl lysine isopeptide (Lys-Gly) (interchain with G-Cter in SUMO). Residues 510-530 traverse the membrane as a helical segment; that stretch reads FPVSFLLKILGLVAVVVAFFC.

This sequence belongs to the FMO family. It depends on FAD as a cofactor. Mg(2+) is required as a cofactor.

The protein resides in the microsome membrane. Its subcellular location is the endoplasmic reticulum membrane. The catalysed reaction is N,N-dimethylaniline + NADPH + O2 + H(+) = N,N-dimethylaniline N-oxide + NADP(+) + H2O. In terms of biological role, catalyzes the oxidative metabolism of numerous xenobiotics, including mainly therapeutic drugs and insecticides that contain a soft nucleophile, most commonly nitrogen and sulfur and participates to their bioactivation. The protein is Dimethylaniline monooxygenase [N-oxide-forming] 2 of Macaca mulatta (Rhesus macaque).